Consider the following 142-residue polypeptide: Large ribosomal subunit protein uL13 (142 aa).

It belongs to the universal ribosomal protein uL13 family. Part of the 50S ribosomal subunit.

In terms of biological role, this protein is one of the early assembly proteins of the 50S ribosomal subunit, although it is not seen to bind rRNA by itself. It is important during the early stages of 50S assembly. The chain is Large ribosomal subunit protein uL13 from Hahella chejuensis (strain KCTC 2396).